A 385-amino-acid polypeptide reads, in one-letter code: Multidrug export protein AcrE (385 aa).

An N-terminal signal peptide occupies residues 1-23 (MTKHARFFLLPSFILISAALIAG). A lipid anchor (N-palmitoyl cysteine) is attached at cysteine 24. The S-diacylglycerol cysteine moiety is linked to residue cysteine 24. The segment at 366-385 (ARPGEQVKATTDTPADTASK) is disordered. The span at 373–385 (KATTDTPADTASK) shows a compositional bias: polar residues.

This sequence belongs to the membrane fusion protein (MFP) (TC 8.A.1) family. Part of the tripartite efflux system AcrEF-TolC, which is composed of an inner membrane transporter, AcrF, a periplasmic membrane fusion protein, AcrE, and an outer membrane component, TolC. The complex forms a large protein conduit and can translocate molecules across both the inner and outer membranes.

The protein resides in the cell inner membrane. In terms of biological role, part of the tripartite efflux system AcrEF-TolC. Involved in the efflux of indole and organic solvents. This is Multidrug export protein AcrE (acrE) from Escherichia coli (strain K12).